We begin with the raw amino-acid sequence, 577 residues long: MNIQSILSDKIKQAMVIAGADQSCDALVRQSGKPQFGDYQANGIMAAAKKLGLNPREFAQKVLDNLQLSDIAEKLEIAGPGFINIFLNPTWLTTEISAALSHKNLGIQATNKQTVVIDYSSPNVAKEMHVGHLRSTIIGDAVARTLEFLGHNVIRANHVGDWGTQFGMLIAYLEKMQNEHASEMELQDLEAFYREAKKHYDEDEIFAEKARNYVVKLQGGDEYCRAMWKRLVDITMQQNQHNYDRLNVTLTEKDVMGESLYNPMLPSIVEDLKKQGLAVEDDGALVVYLDEFKNKEGDPMGVIVQKKDGGFLYTTTDIAAAKYRYETLKANRALVFSDTRQSQHMQQAWLITRKAGYVPDSFSLEHKNFGMMLGKDGKPFKTRTGGTVKLADLLDEAIERATVLINEKNTNLSNDEKQAVIEAIGIGSVKYADLSKNRTTDYVFDWDNMLSFEGNTAPYMQYAYTRIRSIFNKTEINSTALLAAPLTIKDDKERTLAIKLLQFEEAVQTVGKEGTPHVLCAYLYELAGIFSSFYEHCPILNAEDEAVKLSRLKLALLTEKTLKQGLELLGIKTVEKM.

The 'HIGH' region signature appears at 122–132; that stretch reads PNVAKEMHVGH.

This sequence belongs to the class-I aminoacyl-tRNA synthetase family. As to quaternary structure, monomer.

It localises to the cytoplasm. It catalyses the reaction tRNA(Arg) + L-arginine + ATP = L-arginyl-tRNA(Arg) + AMP + diphosphate. The sequence is that of Arginine--tRNA ligase from Haemophilus influenzae (strain PittEE).